Here is a 418-residue protein sequence, read N- to C-terminus: Glutamyl-tRNA reductase (418 aa).

Substrate is bound by residues 49–52 (TCNR), serine 106, 111–113 (EPQ), and glutamine 117. Cysteine 50 acts as the Nucleophile in catalysis. 186–191 (GAGEMI) contacts NADP(+).

This sequence belongs to the glutamyl-tRNA reductase family. As to quaternary structure, homodimer.

The catalysed reaction is (S)-4-amino-5-oxopentanoate + tRNA(Glu) + NADP(+) = L-glutamyl-tRNA(Glu) + NADPH + H(+). Its pathway is porphyrin-containing compound metabolism; protoporphyrin-IX biosynthesis; 5-aminolevulinate from L-glutamyl-tRNA(Glu): step 1/2. In terms of biological role, catalyzes the NADPH-dependent reduction of glutamyl-tRNA(Glu) to glutamate 1-semialdehyde (GSA). The polypeptide is Glutamyl-tRNA reductase (Alcanivorax borkumensis (strain ATCC 700651 / DSM 11573 / NCIMB 13689 / SK2)).